The chain runs to 95 residues: Co-chaperonin GroES (95 aa).

The protein belongs to the GroES chaperonin family. Heptamer of 7 subunits arranged in a ring. Interacts with the chaperonin GroEL.

Its subcellular location is the cytoplasm. Together with the chaperonin GroEL, plays an essential role in assisting protein folding. The GroEL-GroES system forms a nano-cage that allows encapsulation of the non-native substrate proteins and provides a physical environment optimized to promote and accelerate protein folding. GroES binds to the apical surface of the GroEL ring, thereby capping the opening of the GroEL channel. This is Co-chaperonin GroES from Rickettsia bellii (strain RML369-C).